A 181-amino-acid chain; its full sequence is Ribosome-recycling factor (181 aa).

Belongs to the RRF family.

It is found in the cytoplasm. In terms of biological role, responsible for the release of ribosomes from messenger RNA at the termination of protein biosynthesis. May increase the efficiency of translation by recycling ribosomes from one round of translation to another. This Tropheryma whipplei (strain TW08/27) (Whipple's bacillus) protein is Ribosome-recycling factor.